A 123-amino-acid chain; its full sequence is Small ribosomal subunit protein uS13 (123 aa).

A disordered region spans residues 96–123; that stretch reads LPVRGQRTKTNARTRKGPKKTVGARRKK.

This sequence belongs to the universal ribosomal protein uS13 family. As to quaternary structure, part of the 30S ribosomal subunit. Forms a loose heterodimer with protein S19. Forms two bridges to the 50S subunit in the 70S ribosome.

In terms of biological role, located at the top of the head of the 30S subunit, it contacts several helices of the 16S rRNA. In the 70S ribosome it contacts the 23S rRNA (bridge B1a) and protein L5 of the 50S subunit (bridge B1b), connecting the 2 subunits; these bridges are implicated in subunit movement. Contacts the tRNAs in the A and P-sites. The protein is Small ribosomal subunit protein uS13 of Desulforamulus reducens (strain ATCC BAA-1160 / DSM 100696 / MI-1) (Desulfotomaculum reducens).